Consider the following 306-residue polypeptide: Probable cobalamin biosynthesis protein CobD (306 aa).

6 helical membrane-spanning segments follow: residues 17 to 37 (IGEP…IIFF), 54 to 74 (LFGF…AYEI), 88 to 108 (ISLY…IEFS), 155 to 175 (ITDS…PGAF), 207 to 227 (ILNF…APFY), and 286 to 306 (SLKA…VLLM).

The protein belongs to the CobD/CbiB family.

It localises to the cell membrane. Its pathway is cofactor biosynthesis; adenosylcobalamin biosynthesis. Converts cobyric acid to cobinamide by the addition of aminopropanol on the F carboxylic group. The protein is Probable cobalamin biosynthesis protein CobD of Methanococcus maripaludis (strain C5 / ATCC BAA-1333).